The following is a 94-amino-acid chain: ESAT-6-like protein EsxO (94 aa).

It belongs to the WXG100 family. ESAT-6 subfamily. In terms of assembly, forms a complex with EsxP.

Its subcellular location is the secreted. In Mycobacterium tuberculosis (strain CDC 1551 / Oshkosh), this protein is ESAT-6-like protein EsxO.